The following is a 730-amino-acid chain: Hepatocyte growth factor (730 aa).

Residues 1-31 form the signal peptide; that stretch reads MWVTKLLPLLVLQQLLLHLLLLPVAVPRAEG. Glutamine 32 bears the Pyrrolidone carboxylic acid mark. In terms of domain architecture, PAN spans 37 to 123; the sequence is NTLHEFKKSA…HEFDLYENKD (87 aa). Disulfide bonds link cysteine 70/cysteine 96, cysteine 74/cysteine 84, cysteine 128/cysteine 206, cysteine 149/cysteine 189, cysteine 177/cysteine 201, cysteine 211/cysteine 288, cysteine 232/cysteine 271, and cysteine 260/cysteine 283. 2 Kringle domains span residues 128 to 206 and 211 to 288; these read CIIG…IPQC and CMTC…IKMC. Residue asparagine 294 is glycosylated (N-linked (GlcNAc...) asparagine). 11 cysteine pairs are disulfide-bonded: cysteine 305–cysteine 383, cysteine 326–cysteine 365, cysteine 354–cysteine 377, cysteine 391–cysteine 469, cysteine 412–cysteine 452, cysteine 440–cysteine 464, cysteine 487–cysteine 606, cysteine 519–cysteine 535, cysteine 614–cysteine 681, cysteine 644–cysteine 660, and cysteine 671–cysteine 699. Kringle domains are found at residues 305–383 and 391–469; these read CIQG…IPKC and CYRG…IFRC. N-linked (GlcNAc...) asparagine glycosylation occurs at asparagine 402. One can recognise a Peptidase S1 domain in the interval 495–723; that stretch reads VVNGIPTRTN…YAKWIHKIIL (229 aa). N-linked (GlcNAc...) asparagine glycosylation is found at asparagine 568 and asparagine 655.

The protein belongs to the peptidase S1 family. Plasminogen subfamily. As to quaternary structure, dimer of an alpha chain and a beta chain linked by a disulfide bond. Interacts with SRPX2; the interaction increases HGF mitogenic activity. Post-translationally, the single-chain precursor undergoes proteolytic processing by TMPRSS13 resulting in an active two-chain form. The single-chain precursor undergoes proteolytic processing by HGFAC resulting in an active two-chain form.

Its function is as follows. Potent mitogen for mature parenchymal hepatocyte cells, seems to be a hepatotrophic factor, and acts as a growth factor for a broad spectrum of tissues and cell types. Activating ligand for the receptor tyrosine kinase MET by binding to it and promoting its dimerization. Activates MAPK signaling following TMPRSS13 cleavage and activation. The polypeptide is Hepatocyte growth factor (HGF) (Canis lupus familiaris (Dog)).